Consider the following 237-residue polypeptide: MDIRIIYSIQDAVGKTIKELGYKFEEINEDIIDFRYEKGDVIVVFSRHESSSKIPSLTVHYPGNPIDKTMGGEPKKLGIAFPSLLTSIYREIRKINIDIEKAIEATHHGPTYQHIPIIFVEIGSSKEYWENKELVKTLIEATLRGIDKYKDIECENKIVGFGGTHYTPYFSLLAEKSCVGHIISKYYLAELSNEVILQTVNNTIEKIDTVMFDNVNSKIREKIVNLLATYKLNFKFR.

This sequence belongs to the DtdA deacylase family. In terms of assembly, monomer. Zn(2+) serves as cofactor.

The enzyme catalyses a D-aminoacyl-tRNA + H2O = a tRNA + a D-alpha-amino acid + H(+). It carries out the reaction glycyl-tRNA(Ala) + H2O = tRNA(Ala) + glycine + H(+). D-aminoacyl-tRNA deacylase with broad substrate specificity. By recycling D-aminoacyl-tRNA to D-amino acids and free tRNA molecules, this enzyme counteracts the toxicity associated with the formation of D-aminoacyl-tRNA entities in vivo. This Sulfurisphaera tokodaii (strain DSM 16993 / JCM 10545 / NBRC 100140 / 7) (Sulfolobus tokodaii) protein is D-aminoacyl-tRNA deacylase.